The sequence spans 593 residues: Translation initiation factor IF-2 (593 aa).

A tr-type G domain is found at 101–270 (LRPPVVTIMG…LLIAELEDLR (170 aa)). The tract at residues 110-117 (GHVDHGKT) is G1. 110–117 (GHVDHGKT) contributes to the GTP binding site. The segment at 135–139 (GITQH) is G2. The tract at residues 156-159 (DTPG) is G3. GTP is bound by residues 156 to 160 (DTPGH) and 210 to 213 (NKMD). Positions 210–213 (NKMD) are G4. Residues 246–248 (SAR) are G5.

This sequence belongs to the TRAFAC class translation factor GTPase superfamily. Classic translation factor GTPase family. IF-2 subfamily.

The protein resides in the cytoplasm. One of the essential components for the initiation of protein synthesis. Protects formylmethionyl-tRNA from spontaneous hydrolysis and promotes its binding to the 30S ribosomal subunits. Also involved in the hydrolysis of GTP during the formation of the 70S ribosomal complex. The chain is Translation initiation factor IF-2 from Dehalococcoides mccartyi (strain CBDB1).